A 272-amino-acid chain; its full sequence is Prephenate dehydratase (272 aa).

Residues 4–179 (AVIYTLPKGT…NKTRFILIGK (176 aa)) form the Prephenate dehydratase domain. The region spanning 194–269 (IVFELKEDKP…TFINLLGKYP (76 aa)) is the ACT domain.

Homodimer.

The catalysed reaction is prephenate + H(+) = 3-phenylpyruvate + CO2 + H2O. It functions in the pathway amino-acid biosynthesis; L-phenylalanine biosynthesis; phenylpyruvate from prephenate: step 1/1. Its activity is regulated as follows. Inhibited by L-phenylalanine but not by L-tyrosine or L-tryptophan. This Methanocaldococcus jannaschii (strain ATCC 43067 / DSM 2661 / JAL-1 / JCM 10045 / NBRC 100440) (Methanococcus jannaschii) protein is Prephenate dehydratase (pheA).